Reading from the N-terminus, the 811-residue chain is Ribonucleoside-diphosphate reductase large chain (811 aa).

Positions 1-92 (MFVYKRDGRQ…VSNLHKQTEK (92 aa)) constitute an ATP-cone domain. ATP is bound by residues 5 to 6 (KR), 11 to 17 (EKVAFDK), Thr53, and Asp57. The GDP site is built by Ser202 and Ser217. Residues Cys218 and Cys444 are joined by a disulfide bond. DTTP-binding positions include 226 to 228 (DSI), Lys243, Arg256, and 263 to 264 (AG). A GDP-binding site is contributed by Asn427. Asn427 serves as the catalytic Proton acceptor. Cys429 functions as the Cysteine radical intermediate in the catalytic mechanism. GDP is bound by residues Glu431 and 603–606 (TAST). Glu431 (proton acceptor) is an active-site residue.

Belongs to the ribonucleoside diphosphate reductase large chain family. In terms of assembly, heterodimer of a large and a small subunit. Interacts with SPD1.

The catalysed reaction is a 2'-deoxyribonucleoside 5'-diphosphate + [thioredoxin]-disulfide + H2O = a ribonucleoside 5'-diphosphate + [thioredoxin]-dithiol. With respect to regulation, under complex allosteric control mediated by deoxynucleoside triphosphates and ATP binding to separate specificity and activation sites on the large subunit. The type of nucleotide bound at the specificity site determines substrate preference. It seems probable that ATP makes the enzyme reduce CDP and UDP, dGTP favors ADP reduction and dTTP favors GDP reduction. Stimulated by ATP and inhibited by dATP binding to the activity site. Provides the precursors necessary for DNA synthesis. Catalyzes the biosynthesis of deoxyribonucleotides from the corresponding ribonucleotides. The chain is Ribonucleoside-diphosphate reductase large chain (cdc22) from Schizosaccharomyces pombe (strain 972 / ATCC 24843) (Fission yeast).